The primary structure comprises 121 residues: Small ribosomal subunit protein bS16 (121 aa).

The span at 97 to 114 (LAKAKTKDGDNDSSKAES) shows a compositional bias: basic and acidic residues. Residues 97 to 121 (LAKAKTKDGDNDSSKAESESNEAET) form a disordered region.

Belongs to the bacterial ribosomal protein bS16 family.

The chain is Small ribosomal subunit protein bS16 from Prochlorococcus marinus (strain MIT 9301).